The primary structure comprises 115 residues: Cycloviolacin-O13 (115 aa).

The N-terminal stretch at 1 to 22 (MDAKKMFVALVLIATFALPSLA) is a signal peptide. Residues 23–81 (TFEKDFITPETIQAILKKSAPLSNIMLEEDVINALLKSKTVISNPIIEEAFLKNSNGLN) constitute a propeptide that is removed on maturation. Positions 82–111 (GIPCGESCVWIPCISAAIGCSCKSKVCYRN) form a cross-link, cyclopeptide (Gly-Asn). 3 disulfide bridges follow: C85–C101, C89–C103, and C94–C108. The propeptide occupies 112–115 (SLDN).

Cycloviolacin-O13 is a cyclic peptide. In terms of tissue distribution, expressed in leaves, petals, petioles, roots and runners (at protein level).

Its function is as follows. Probably participates in a plant defense mechanism. Has hemolytic activity. The polypeptide is Cycloviolacin-O13 (Viola odorata (Sweet violet)).